An 820-amino-acid polypeptide reads, in one-letter code: Scavenger receptor class F member 1 (820 aa).

Residues M1–G23 form the signal peptide. Topologically, residues S24–N422 are extracellular. EGF-like domains follow at residues T56–S90, W98–E133, R163–S193, and W217–E251. 12 disulfides stabilise this stretch: C60–C72, C66–C78, C80–C89, C102–C114, C108–C121, C123–C132, C166–C174, C168–C181, C183–C192, C221–C232, C225–C239, and C241–C250. The N-linked (GlcNAc...) asparagine glycan is linked to N291. EGF-like domains lie at F304–E341 and C353–N384. The helical transmembrane segment at A423–A443 threads the bilayer. The Cytoplasmic portion of the chain corresponds to Y444 to H820. 2 disordered regions span residues P549–S685 and N715–H820. S590 and S607 each carry phosphoserine. Acidic residues predominate over residues Q631–A648. Residues T650–G662 are compositionally biased toward polar residues.

As to quaternary structure, heterophilic interaction with SREC2 via its extracellular domain. The heterophilic interaction is suppressed by the presence of ligand such as Ac-LDL. Interacts with AVIL; the interaction occurs in embryonic dorsal root ganglions at 18 dpc and induces neurite-like outgrowth. Expressed weakly in brain, spinal cord and dorsal root ganglions.

The protein localises to the membrane. In terms of biological role, mediates the binding and degradation of acetylated low density lipoprotein (Ac-LDL). Mediates heterophilic interactions, suggesting a function as adhesion protein. Plays a role in the regulation of neurite-like outgrowth. The protein is Scavenger receptor class F member 1 (Scarf1) of Mus musculus (Mouse).